We begin with the raw amino-acid sequence, 147 residues long: MEWHSKFSGPNTSPGFLLWQATQSWQRKVGKALAEFDLTHVQFVLLTSCKYMIAHGETVTQKKLASFSQTNIMMVSEVVRTLEKKGFIERSKNPQDKREVLLSLTEIGGEKVTAALPIVEKIDQAFFAAAMKKENFLSGLQELLKHE.

The 137-residue stretch at 11-147 (NTSPGFLLWQ…SGLQELLKHE (137 aa)) folds into the HTH marR-type domain. Residues 61–84 (QKKLASFSQTNIMMVSEVVRTLEK) constitute a DNA-binding region (H-T-H motif).

This is an uncharacterized protein from Bacillus subtilis (strain 168).